The primary structure comprises 640 residues: UvrABC system protein C (640 aa).

One can recognise a GIY-YIG domain in the interval 22-101 (NDPGCYLMKD…IKSHQPYFNV (80 aa)). The region spanning 211–246 (DELRILLEKQMISFSESLKFEEAGSVRDQLKGIDRL) is the UVR domain.

Belongs to the UvrC family. Interacts with UvrB in an incision complex.

The protein localises to the cytoplasm. Its function is as follows. The UvrABC repair system catalyzes the recognition and processing of DNA lesions. UvrC both incises the 5' and 3' sides of the lesion. The N-terminal half is responsible for the 3' incision and the C-terminal half is responsible for the 5' incision. The protein is UvrABC system protein C of Prochlorococcus marinus (strain NATL1A).